Consider the following 162-residue polypeptide: Endoribonuclease YbeY (162 aa).

Zn(2+) contacts are provided by H117, H121, and H127.

This sequence belongs to the endoribonuclease YbeY family. Requires Zn(2+) as cofactor.

The protein localises to the cytoplasm. Functionally, single strand-specific metallo-endoribonuclease involved in late-stage 70S ribosome quality control and in maturation of the 3' terminus of the 16S rRNA. The polypeptide is Endoribonuclease YbeY (Francisella tularensis subsp. novicida (strain U112)).